We begin with the raw amino-acid sequence, 327 residues long: GMP reductase (327 aa).

Cysteine 176 (thioimidate intermediate) is an active-site residue. 205–228 (IIADGGIRTHGDIAKSIRFGASMV) serves as a coordination point for NADP(+).

This sequence belongs to the IMPDH/GMPR family. GuaC type 2 subfamily.

It carries out the reaction IMP + NH4(+) + NADP(+) = GMP + NADPH + 2 H(+). Its function is as follows. Catalyzes the irreversible NADPH-dependent deamination of GMP to IMP. It functions in the conversion of nucleobase, nucleoside and nucleotide derivatives of G to A nucleotides, and in maintaining the intracellular balance of A and G nucleotides. This chain is GMP reductase, found in Streptococcus pyogenes serotype M5 (strain Manfredo).